A 130-amino-acid polypeptide reads, in one-letter code: Protein ApaG (130 aa).

An ApaG domain is found at 3 to 127; sequence SAVTRGIEVT…FSLDVPEQRR (125 aa).

The sequence is that of Protein ApaG from Brucella canis (strain ATCC 23365 / NCTC 10854 / RM-666).